A 313-amino-acid chain; its full sequence is Olfactory receptor 5H15 (313 aa).

Residues 1–28 (MEEENATLLTEFVLTGFLYQPQWKIPLF) are Extracellular-facing. The N-linked (GlcNAc...) asparagine glycan is linked to asparagine 5. The chain crosses the membrane as a helical span at residues 29-49 (LAFLVIYLITIMGNLGLIAVI). Topologically, residues 50-56 (WKDPHLH) are cytoplasmic. A helical transmembrane segment spans residues 57-77 (IPMYLLLGNLAFVDAWISSTV). Residues 78-98 (TPKMLNNFLAKSKMISLSECK) lie on the Extracellular side of the membrane. A disulfide bond links cysteine 97 and cysteine 179. The chain crosses the membrane as a helical span at residues 99–119 (IQFFSIAIGVTTECFLLATMA). Over 120–143 (YDRYVAICKPLLYPAIMTNGLCIR) the chain is Cytoplasmic. The chain crosses the membrane as a helical span at residues 144–164 (LLILSYIAGILHALIHEGFLF). Residues 165 to 195 (RLTFCNSNIVHHIYCDTIPLSKISCTDSSIN) lie on the Extracellular side of the membrane. A helical transmembrane segment spans residues 196–216 (FLMVFIFSGSIQVFSIVTILI). Residues 217–240 (SYTFVLFTVLEKKSDKGVRKAFST) lie on the Cytoplasmic side of the membrane. Residues 241–261 (CGAHLFSVCLYYGPLLLMYVG) form a helical membrane-spanning segment. Over 262 to 271 (PASPQADGQN) the chain is Extracellular. A helical membrane pass occupies residues 272–292 (MVEPLFYTVIIPLLNPIIYSL). Residues 293–313 (RNKQVIVSFIKMLKRNVKVSY) lie on the Cytoplasmic side of the membrane.

The protein belongs to the G-protein coupled receptor 1 family.

Its subcellular location is the cell membrane. In terms of biological role, odorant receptor. The chain is Olfactory receptor 5H15 (OR5H15) from Homo sapiens (Human).